The primary structure comprises 196 residues: Peroxiredoxin TSA1-B (196 aa).

The 159-residue stretch at 3-161 folds into the Thioredoxin domain; it reads PVVQQPAPSF…SLRLLEAFQF (159 aa). 45 to 47 is a binding site for substrate; it reads TFV. C48 acts as the Cysteine sulfenic acid (-SOH) intermediate in catalysis. R124 is a substrate binding site. A disordered region spans residues 173 to 196; it reads WHPGDETIKPSPEASKEYFNKVNK. Over residues 175–196 the composition is skewed to basic and acidic residues; sequence PGDETIKPSPEASKEYFNKVNK.

The protein belongs to the peroxiredoxin family. AhpC/Prx1 subfamily. As to quaternary structure, homodimer; disulfide-linked, upon oxidation.

It localises to the cell surface. The protein localises to the nucleus. It is found in the cytoplasm. It catalyses the reaction a hydroperoxide + [thioredoxin]-dithiol = an alcohol + [thioredoxin]-disulfide + H2O. Functionally, thiol-specific peroxidase that catalyzes the reduction of hydrogen peroxide and organic hydroperoxides to water and alcohols, respectively. Plays a role in cell protection against oxidative stress by detoxifying peroxides and as sensor of hydrogen peroxide-mediated signaling events. Also involved in the correct composition of the hyphal cell wall. The sequence is that of Peroxiredoxin TSA1-B from Candida albicans (strain SC5314 / ATCC MYA-2876) (Yeast).